We begin with the raw amino-acid sequence, 252 residues long: Imidazole glycerol phosphate synthase subunit HisF (252 aa).

Active-site residues include Asp-11 and Asp-130.

The protein belongs to the HisA/HisF family. Heterodimer of HisH and HisF.

The protein localises to the cytoplasm. The catalysed reaction is 5-[(5-phospho-1-deoxy-D-ribulos-1-ylimino)methylamino]-1-(5-phospho-beta-D-ribosyl)imidazole-4-carboxamide + L-glutamine = D-erythro-1-(imidazol-4-yl)glycerol 3-phosphate + 5-amino-1-(5-phospho-beta-D-ribosyl)imidazole-4-carboxamide + L-glutamate + H(+). It functions in the pathway amino-acid biosynthesis; L-histidine biosynthesis; L-histidine from 5-phospho-alpha-D-ribose 1-diphosphate: step 5/9. In terms of biological role, IGPS catalyzes the conversion of PRFAR and glutamine to IGP, AICAR and glutamate. The HisF subunit catalyzes the cyclization activity that produces IGP and AICAR from PRFAR using the ammonia provided by the HisH subunit. The sequence is that of Imidazole glycerol phosphate synthase subunit HisF from Thermococcus onnurineus (strain NA1).